The chain runs to 66 residues: Cold shock protein 1 (66 aa).

Positions 4-63 constitute a CSD domain; it reads GTVKWFNADKGYGFITGEDGNDVFVHFSAIQTDGFKTLEEGQKVTFDEESSDRGPQAANV. The segment at 47-66 is disordered; sequence VTFDEESSDRGPQAANVVPQ.

Its subcellular location is the cytoplasm. In Lactiplantibacillus plantarum (strain ATCC BAA-793 / NCIMB 8826 / WCFS1) (Lactobacillus plantarum), this protein is Cold shock protein 1 (csp).